The sequence spans 145 residues: D-aminoacyl-tRNA deacylase (145 aa).

Residues 137 to 138 (GP) carry the Gly-cisPro motif, important for rejection of L-amino acids motif.

The protein belongs to the DTD family. Homodimer.

Its subcellular location is the cytoplasm. It carries out the reaction glycyl-tRNA(Ala) + H2O = tRNA(Ala) + glycine + H(+). It catalyses the reaction a D-aminoacyl-tRNA + H2O = a tRNA + a D-alpha-amino acid + H(+). An aminoacyl-tRNA editing enzyme that deacylates mischarged D-aminoacyl-tRNAs. Also deacylates mischarged glycyl-tRNA(Ala), protecting cells against glycine mischarging by AlaRS. Acts via tRNA-based rather than protein-based catalysis; rejects L-amino acids rather than detecting D-amino acids in the active site. By recycling D-aminoacyl-tRNA to D-amino acids and free tRNA molecules, this enzyme counteracts the toxicity associated with the formation of D-aminoacyl-tRNA entities in vivo and helps enforce protein L-homochirality. This Photorhabdus laumondii subsp. laumondii (strain DSM 15139 / CIP 105565 / TT01) (Photorhabdus luminescens subsp. laumondii) protein is D-aminoacyl-tRNA deacylase.